A 337-amino-acid polypeptide reads, in one-letter code: GTP 3',8-cyclase (337 aa).

The Radical SAM core domain maps to 17 to 243; that stretch reads PFQRQYYYLR…HKSHTDGPAK (227 aa). Arginine 26 provides a ligand contact to GTP. Residues cysteine 33 and cysteine 37 each contribute to the [4Fe-4S] cluster site. Position 39 (tyrosine 39) interacts with S-adenosyl-L-methionine. Cysteine 40 contacts [4Fe-4S] cluster. Position 76 (arginine 76) interacts with GTP. Glycine 80 contacts S-adenosyl-L-methionine. A GTP-binding site is contributed by threonine 107. Serine 131 provides a ligand contact to S-adenosyl-L-methionine. Lysine 168 is a binding site for GTP. An S-adenosyl-L-methionine-binding site is contributed by methionine 202. [4Fe-4S] cluster contacts are provided by cysteine 265 and cysteine 268. Residue 270–272 coordinates GTP; sequence RLR. Residue cysteine 282 coordinates [4Fe-4S] cluster.

The protein belongs to the radical SAM superfamily. MoaA family. Monomer and homodimer. [4Fe-4S] cluster serves as cofactor.

The catalysed reaction is GTP + AH2 + S-adenosyl-L-methionine = (8S)-3',8-cyclo-7,8-dihydroguanosine 5'-triphosphate + 5'-deoxyadenosine + L-methionine + A + H(+). It functions in the pathway cofactor biosynthesis; molybdopterin biosynthesis. In terms of biological role, catalyzes the cyclization of GTP to (8S)-3',8-cyclo-7,8-dihydroguanosine 5'-triphosphate. This chain is GTP 3',8-cyclase, found in Haemophilus influenzae (strain PittEE).